The chain runs to 227 residues: Protein PhlB (227 aa).

Residues 1–35 (MPEGRRLRRALAIALLALVAVTGLLMMAKEQQMGQ) form the signal peptide. ANK repeat units lie at residues 75–104 (RQVTLLQWAVLSQQPDSVQALLDLGADPAA), 108–137 (DGNSALHTAAMLQDAQYLRLLLAEGAQMNV), 142–171 (TGATPLAAAVLAGREEQLRLLLAAGADTTL), and 175–204 (LGDTPLHLAAKINRRTWRCCCCRPGPMPGR).

Functionally, cell-protective protein that neutralizes the intracellular lysis capacity of phospholipase A1 through a direct interaction with the enzyme. The sequence is that of Protein PhlB (phlB) from Serratia liquefaciens.